The chain runs to 208 residues: NADH-ubiquinone oxidoreductase chain 4 (208 aa).

A run of 6 helical transmembrane segments spans residues 23 to 43, 60 to 80, 93 to 113, 114 to 134, 147 to 167, and 188 to 208; these read VWIN…VTLW, SLSS…LLAS, KMYI…FSAN, ELIM…IIIT, LYFL…LISI, and PTWS…IKMP.

Belongs to the complex I subunit 4 family. In terms of assembly, core subunit of respiratory chain NADH dehydrogenase (Complex I) which is composed of 45 different subunits.

It is found in the mitochondrion inner membrane. It carries out the reaction a ubiquinone + NADH + 5 H(+)(in) = a ubiquinol + NAD(+) + 4 H(+)(out). Functionally, core subunit of the mitochondrial membrane respiratory chain NADH dehydrogenase (Complex I) which catalyzes electron transfer from NADH through the respiratory chain, using ubiquinone as an electron acceptor. Essential for the catalytic activity and assembly of complex I. The polypeptide is NADH-ubiquinone oxidoreductase chain 4 (MT-ND4) (Phodopus sungorus (Striped hairy-footed hamster)).